The sequence spans 387 residues: Phosphoglycerate kinase (387 aa).

Residues 21–23 (DLN), arginine 36, 59–62 (HLGR), arginine 113, and arginine 146 contribute to the substrate site. ATP contacts are provided by residues lysine 197, glutamate 314, and 340-343 (GGDT).

This sequence belongs to the phosphoglycerate kinase family. Monomer.

Its subcellular location is the cytoplasm. It catalyses the reaction (2R)-3-phosphoglycerate + ATP = (2R)-3-phospho-glyceroyl phosphate + ADP. It participates in carbohydrate degradation; glycolysis; pyruvate from D-glyceraldehyde 3-phosphate: step 2/5. The sequence is that of Phosphoglycerate kinase from Klebsiella pneumoniae (strain 342).